The chain runs to 252 residues: Flagellar brake protein YcgR (252 aa).

A PilZ domain is found at 123-238 (QRREFYRVPT…TLATVQKYIT (116 aa)).

It belongs to the YcgR family. In terms of assembly, monomer. Interacts with the flagellar basal bodies.

The protein resides in the bacterial flagellum basal body. Its function is as follows. Acts as a flagellar brake, regulating swimming and swarming in a bis-(3'-5') cyclic diguanylic acid (c-di-GMP)-dependent manner. Binds 1 c-di-GMP dimer per subunit. Increasing levels of c-di-GMP lead to decreased motility. This Janthinobacterium sp. (strain Marseille) (Minibacterium massiliensis) protein is Flagellar brake protein YcgR.